We begin with the raw amino-acid sequence, 434 residues long: 3-phosphoshikimate 1-carboxyvinyltransferase (434 aa).

Residues Lys22, Ser23, and Arg27 each coordinate 3-phosphoshikimate. Position 22 (Lys22) interacts with phosphoenolpyruvate. 2 residues coordinate phosphoenolpyruvate: Gly93 and Arg121. 3-phosphoshikimate is bound by residues Ser168, Ser169, Gln170, Ser199, Asp320, and Lys347. Residue Gln170 coordinates phosphoenolpyruvate. The Proton acceptor role is filled by Asp320. 3 residues coordinate phosphoenolpyruvate: Arg351, Arg394, and Lys419.

The protein belongs to the EPSP synthase family. Monomer.

It localises to the cytoplasm. It catalyses the reaction 3-phosphoshikimate + phosphoenolpyruvate = 5-O-(1-carboxyvinyl)-3-phosphoshikimate + phosphate. Its pathway is metabolic intermediate biosynthesis; chorismate biosynthesis; chorismate from D-erythrose 4-phosphate and phosphoenolpyruvate: step 6/7. Catalyzes the transfer of the enolpyruvyl moiety of phosphoenolpyruvate (PEP) to the 5-hydroxyl of shikimate-3-phosphate (S3P) to produce enolpyruvyl shikimate-3-phosphate and inorganic phosphate. The protein is 3-phosphoshikimate 1-carboxyvinyltransferase of Burkholderia lata (strain ATCC 17760 / DSM 23089 / LMG 22485 / NCIMB 9086 / R18194 / 383).